Consider the following 276-residue polypeptide: Protease HtpX homolog (276 aa).

A helical transmembrane segment spans residues leucine 16–valine 36. A Zn(2+)-binding site is contributed by histidine 130. Glutamate 131 is a catalytic residue. Histidine 134 provides a ligand contact to Zn(2+). A run of 2 helical transmembrane segments spans residues isoleucine 142 to phenylalanine 162 and isoleucine 173 to threonine 193. Glutamate 199 is a Zn(2+) binding site.

This sequence belongs to the peptidase M48B family. The cofactor is Zn(2+).

The protein resides in the cell inner membrane. In Sulfurovum sp. (strain NBC37-1), this protein is Protease HtpX homolog.